The chain runs to 212 residues: Uracil phosphoribosyltransferase (212 aa).

5-phospho-alpha-D-ribose 1-diphosphate contacts are provided by residues R78, R103, and 130–138 (DPMLATGSS). Uracil-binding positions include I193 and 198 to 200 (GDA). D199 is a 5-phospho-alpha-D-ribose 1-diphosphate binding site.

Belongs to the UPRTase family. Requires Mg(2+) as cofactor.

The enzyme catalyses UMP + diphosphate = 5-phospho-alpha-D-ribose 1-diphosphate + uracil. It participates in pyrimidine metabolism; UMP biosynthesis via salvage pathway; UMP from uracil: step 1/1. Allosterically activated by GTP. Catalyzes the conversion of uracil and 5-phospho-alpha-D-ribose 1-diphosphate (PRPP) to UMP and diphosphate. The chain is Uracil phosphoribosyltransferase from Pseudomonas savastanoi pv. phaseolicola (strain 1448A / Race 6) (Pseudomonas syringae pv. phaseolicola (strain 1448A / Race 6)).